A 178-amino-acid polypeptide reads, in one-letter code: Non-specific lipid transfer protein-like 1 (178 aa).

An N-terminal signal peptide occupies residues 1 to 26 (MAVAARAAAVACLLVVGLAAVAGVDG). 2 disulfide bridges follow: C50–C68 and C69–C110. N99 carries N-linked (GlcNAc...) asparagine glycosylation. Residue A149 is the site of GPI-anchor amidated alanine attachment. A propeptide spans 150–178 (AARSPMASTTAVLVVAAAVAAPLLAFFHF) (removed in mature form).

It belongs to the plant LTP family. O-glycosylated on hydroxyprolines; noncontiguous hydroxylproline residues are glycosylated with arabinogalactan. In terms of tissue distribution, expressed in roots, stems, leaves, flowers and seeds.

Its subcellular location is the vacuole. It is found in the aleurone grain membrane. The polypeptide is Non-specific lipid transfer protein-like 1 (LTPL1) (Oryza sativa subsp. japonica (Rice)).